The chain runs to 453 residues: uncharacterized protein (453 aa).

2 disordered regions span residues 183–210 (GNGR…RSLS) and 428–453 (PDSM…QYSK). Over residues 198–207 (TKAHNYKTRR) the composition is skewed to basic residues. Polar residues predominate over residues 433-453 (HPPTFSKNNTSSNPKSHQYSK).

This is an uncharacterized protein from Saccharomyces cerevisiae (strain ATCC 204508 / S288c) (Baker's yeast).